An 832-amino-acid chain; its full sequence is AP-1 complex subunit gamma-1 (832 aa).

The region spanning 733-832 is the GAE domain; the sequence is LNVYASLLSA…QFDHKFDETL (100 aa).

Adapter protein complex 1 (AP-1) is a heterotetramer composed of two large adaptins (gamma-type subunit APL4 and beta-type subunit APL2), a medium adaptin (mu-type subunit APM1) and a small adaptin (sigma-type subunit APS1). AP-1 interacts with clathrin. Also a component of the AP-1R complex composed of at least APM2, APL4 and APS1.

The protein localises to the cytoplasm. It is found in the golgi apparatus membrane. Its subcellular location is the cytoplasmic vesicle. The protein resides in the clathrin-coated vesicle membrane. Its function is as follows. Adaptins are components of the adapter complexes which link clathrin to receptors in coated vesicles. Clathrin-associated protein complexes are believed to interact with the cytoplasmic tails of membrane proteins, leading to their selection and concentration. The AP-1 complex interacts directly with clathrin. Component of the AP-1-related (AP-1R) complex, an adapter protein complex that mediates sorting of cargo SNARE SNC1. In contrast to the APM1-containing AP-1 complex, AP-1R is incapable of sorting CHS3. The chain is AP-1 complex subunit gamma-1 (APL4) from Saccharomyces cerevisiae (strain ATCC 204508 / S288c) (Baker's yeast).